Reading from the N-terminus, the 389-residue chain is GDSL esterase/lipase At5g14450 (389 aa).

The N-terminal stretch at 1-30 (MKDNLERAKLMVSSTVFSWLLLCLFAVTTS) is a signal peptide. The Nucleophile role is filled by Ser48. Asn125 and Asn335 each carry an N-linked (GlcNAc...) asparagine glycan. Active-site residues include Asp354 and His357.

The protein belongs to the 'GDSL' lipolytic enzyme family.

The protein localises to the secreted. This chain is GDSL esterase/lipase At5g14450, found in Arabidopsis thaliana (Mouse-ear cress).